We begin with the raw amino-acid sequence, 154 residues long: Regulatory protein RecX (154 aa).

The protein belongs to the RecX family.

It is found in the cytoplasm. Functionally, modulates RecA activity. This chain is Regulatory protein RecX, found in Trichlorobacter lovleyi (strain ATCC BAA-1151 / DSM 17278 / SZ) (Geobacter lovleyi).